A 240-amino-acid polypeptide reads, in one-letter code: LexA repressor (240 aa).

The segment at residues 26-46 (FDEMKDALDLASKSGIHRLIT) is a DNA-binding region (H-T-H motif). The interval 78–113 (QPRRGFSPSVIEGSLGKPQPVQPPAPAKPANDENNS) is disordered. Residues Ser160 and Lys198 each act as for autocatalytic cleavage activity in the active site.

This sequence belongs to the peptidase S24 family. As to quaternary structure, homodimer.

It catalyses the reaction Hydrolysis of Ala-|-Gly bond in repressor LexA.. In terms of biological role, represses a number of genes involved in the response to DNA damage (SOS response), including recA and lexA. In the presence of single-stranded DNA, RecA interacts with LexA causing an autocatalytic cleavage which disrupts the DNA-binding part of LexA, leading to derepression of the SOS regulon and eventually DNA repair. The polypeptide is LexA repressor (Rhizobium rhizogenes (strain K84 / ATCC BAA-868) (Agrobacterium radiobacter)).